Here is a 180-residue protein sequence, read N- to C-terminus: Progesterone receptor (180 aa).

The NR C4-type zinc finger occupies 1–11; the sequence is KNCPACRLRKC. A DNA-binding region (nuclear receptor) is located at residues 1–16; it reads KNCPACRLRKCCQAGM. Residue serine 60 is modified to Phosphoserine. The region spanning 63–180 is the NR LBD domain; sequence QEIQLFPPLI…QRMKESSFYS (118 aa). The AF2; mediates transcriptional activation stretch occupies residues 71 to 180; it reads LINLLLSIEP…QRMKESSFYS (110 aa). Arginine 150 contacts progesterone.

The protein belongs to the nuclear hormone receptor family. NR3 subfamily. As to quaternary structure, interacts with SMARD1 and UNC45A. Interacts with CUEDC2; the interaction promotes ubiquitination, decreases sumoylation, and represses transcriptional activity. Interacts with PIAS3; the interaction promotes sumoylation of PR in a hormone-dependent manner, inhibits DNA-binding, and alters nuclear export. Interacts with SP1; the interaction requires ligand-induced phosphorylation by ERK1/2-MAPK. Interacts with PRMT2. Interacts with NCOA2 and NCOA1. Interacts with KLF9. Interacts with GTF2B. Phosphorylated on multiple serine sites. Several of these sites are hormone-dependent. Post-translationally, sumoylation is hormone-dependent and represses transcriptional activity. Sumoylation on all three sites is enhanced by PIAS3. Desumoylated by SENP1. Sumoylation is repressed by ubiquitination and modulated by phosphorylation. In terms of processing, ubiquitination is hormone-dependent and represses sumoylation. Palmitoylated by ZDHHC7 and ZDHHC21. Palmitoylation is required for plasma membrane targeting and for rapid intracellular signaling via ERK and AKT kinases and cAMP generation.

The protein resides in the nucleus. Its subcellular location is the cytoplasm. Functionally, the steroid hormones and their receptors are involved in the regulation of eukaryotic gene expression and affect cellular proliferation and differentiation in target tissues. Transcriptional activator of several progesteron-dependent promoters in a variety of cell types. Involved in activation of SRC-dependent MAPK signaling on hormone stimulation. The chain is Progesterone receptor (PGR) from Notamacropus eugenii (Tammar wallaby).